The following is a 476-amino-acid chain: Growth arrest-specific protein 7 (476 aa).

Positions 1–62 (MSGARCRTLY…PASYVQLLEK (62 aa)) constitute an SH3 domain. The region spanning 77-110 (VILPPGWQSYLSPQGRRYYVNTTTNETTWERPSS) is the WW domain. Residues 100-171 (TNETTWERPS…SSPSKKQSKE (72 aa)) form a disordered region. Low complexity predominate over residues 108–120 (PSSSPGIPASPGS). Residues S117 and S163 each carry the phosphoserine modification. Over residues 150–171 (RKSTGDSQNLGSSSPSKKQSKE) the composition is skewed to polar residues. An F-BAR domain is found at 196–456 (TEWSYCDYFW…LLRKVDPAKD (261 aa)). Positions 309–419 (ENFKKDMKKC…RLEVERVEMI (111 aa)) form a coiled coil.

Its subcellular location is the cytoplasm. May play a role in promoting maturation and morphological differentiation of cerebellar neurons. The protein is Growth arrest-specific protein 7 (GAS7) of Homo sapiens (Human).